Here is a 244-residue protein sequence, read N- to C-terminus: MNIDLNADLGEGCASDSELLTLVSSANIACGFHAGDAQTMLTCVREALKNGVAIGAHPSFPDRDNFGRTAMALPPETVYAQTLYQIGALGAIVQAQGGVMRHVKPHGMLYNQAAKDPHLAQAIAKAVHDYDPSLILVGLAGSELIRAGERYRLVTRQEVFADRGYQADGSLVPRTQPGALIHDEEQALAQTLDMVQAGRVKSVTGVWTTVTAQTVCIHGDGEYALAFARRLRAAFNARNIHVIA.

It belongs to the LamB/PxpA family. As to quaternary structure, forms a complex composed of PxpA, PxpB and PxpC.

It catalyses the reaction 5-oxo-L-proline + ATP + 2 H2O = L-glutamate + ADP + phosphate + H(+). Functionally, catalyzes the cleavage of 5-oxoproline to form L-glutamate coupled to the hydrolysis of ATP to ADP and inorganic phosphate. This is 5-oxoprolinase subunit A from Salmonella schwarzengrund (strain CVM19633).